Here is a 304-residue protein sequence, read N- to C-terminus: Protein pxr1 (304 aa).

Residues 1-11 (MGLAAPRKKTK) are compositionally biased toward basic residues. Disordered stretches follow at residues 1-25 (MGLA…SRST), 144-238 (NATA…DTET), and 256-276 (TSLL…MGRR). Residues 15–25 (DPNNTSWSRST) show a composition bias toward polar residues. Residues 25–79 (TDGFGHRILKAQGWTPGDFLGARNATHSDLFTTASASHIRVVLKDDTLGLGARPK) enclose the G-patch domain. 2 stretches are compositionally biased toward basic and acidic residues: residues 154–170 (LRVD…HENG) and 204–238 (GKEM…DTET). Residues 256-266 (TSLLASNGPST) show a composition bias toward polar residues.

It belongs to the PINX1 family.

It is found in the nucleus. Its subcellular location is the nucleolus. Involved in rRNA-processing at A0, A1 and A2 sites and negatively regulates telomerase. The chain is Protein pxr1 (pxr1) from Aspergillus fumigatus (strain ATCC MYA-4609 / CBS 101355 / FGSC A1100 / Af293) (Neosartorya fumigata).